The primary structure comprises 106 residues: uncharacterized protein (106 aa).

The helical transmembrane segment at 78-98 (LAITGYVVSIPIVLPILIIFI) threads the bilayer.

The protein localises to the membrane. This is an uncharacterized protein from Haemophilus influenzae (strain ATCC 51907 / DSM 11121 / KW20 / Rd).